The primary structure comprises 261 residues: 3-methyl-2-oxobutanoate hydroxymethyltransferase (261 aa).

Residues Asp42 and Asp81 each contribute to the Mg(2+) site. 3-methyl-2-oxobutanoate contacts are provided by residues 42–43 (DS), Asp81, and Lys110. Residue Glu112 coordinates Mg(2+). Glu179 acts as the Proton acceptor in catalysis.

The protein belongs to the PanB family. As to quaternary structure, homodecamer; pentamer of dimers. The cofactor is Mg(2+).

It localises to the cytoplasm. The enzyme catalyses 3-methyl-2-oxobutanoate + (6R)-5,10-methylene-5,6,7,8-tetrahydrofolate + H2O = 2-dehydropantoate + (6S)-5,6,7,8-tetrahydrofolate. It functions in the pathway cofactor biosynthesis; (R)-pantothenate biosynthesis; (R)-pantoate from 3-methyl-2-oxobutanoate: step 1/2. In terms of biological role, catalyzes the reversible reaction in which hydroxymethyl group from 5,10-methylenetetrahydrofolate is transferred onto alpha-ketoisovalerate to form ketopantoate. The chain is 3-methyl-2-oxobutanoate hydroxymethyltransferase from Thermus thermophilus (strain ATCC 27634 / DSM 579 / HB8).